A 430-amino-acid chain; its full sequence is Adenylosuccinate synthetase (430 aa).

Residues 12–18 and 40–42 contribute to the GTP site; these read GDEGKGK and GHT. Catalysis depends on Asp-13, which acts as the Proton acceptor. Residues Asp-13 and Gly-40 each coordinate Mg(2+). IMP contacts are provided by residues 13 to 16, 38 to 41, Thr-130, Arg-144, Gln-224, Thr-239, and Arg-303; these read DEGK and NAGH. Catalysis depends on His-41, which acts as the Proton donor. Substrate is bound at residue 299–305; it reads TVTGRKR. GTP-binding positions include Arg-305, 331–333, and 413–415; these read KLD and STS.

This sequence belongs to the adenylosuccinate synthetase family. As to quaternary structure, homodimer. Mg(2+) serves as cofactor.

The protein resides in the cytoplasm. It carries out the reaction IMP + L-aspartate + GTP = N(6)-(1,2-dicarboxyethyl)-AMP + GDP + phosphate + 2 H(+). Its pathway is purine metabolism; AMP biosynthesis via de novo pathway; AMP from IMP: step 1/2. Functionally, plays an important role in the de novo pathway of purine nucleotide biosynthesis. Catalyzes the first committed step in the biosynthesis of AMP from IMP. This chain is Adenylosuccinate synthetase, found in Cereibacter sphaeroides (strain ATCC 17029 / ATH 2.4.9) (Rhodobacter sphaeroides).